A 380-amino-acid polypeptide reads, in one-letter code: 12-oxophytodienoate reductase 1 (380 aa).

FMN is bound by residues 35 to 37 (PLT), alanine 68, and glutamine 110. A substrate-binding site is contributed by 182–185 (HGAH). Residue tyrosine 187 is the Proton donor of the active site. An FMN-binding site is contributed by arginine 234. Residue arginine 275 coordinates substrate. Residues glycine 305 and 326–327 (GR) each bind FMN.

Belongs to the NADH:flavin oxidoreductase/NADH oxidase family. It depends on FMN as a cofactor.

The catalysed reaction is (1S,2S)-OPC-8 + NADP(+) = (9S,13S,15Z)-12-oxophyto-10,15-dienoate + NADPH + H(+). It functions in the pathway lipid metabolism; oxylipin biosynthesis. Functionally, probably involved in the biosynthesis or metabolism of oxylipin signaling molecules. In vitro, reduces cis(-)-12-oxophytodienoic acid (cis(-)-OPDA) and to cis(-)-OPC-8:0. The chain is 12-oxophytodienoate reductase 1 from Oryza sativa subsp. japonica (Rice).